Here is a 316-residue protein sequence, read N- to C-terminus: tRNA dimethylallyltransferase (316 aa).

An ATP-binding site is contributed by 23-30 (GPTASGKS). 25–30 (TASGKS) contributes to the substrate binding site. Residues 48-51 (DSMQ) form an interaction with substrate tRNA region.

The protein belongs to the IPP transferase family. In terms of assembly, monomer. The cofactor is Mg(2+).

The catalysed reaction is adenosine(37) in tRNA + dimethylallyl diphosphate = N(6)-dimethylallyladenosine(37) in tRNA + diphosphate. Catalyzes the transfer of a dimethylallyl group onto the adenine at position 37 in tRNAs that read codons beginning with uridine, leading to the formation of N6-(dimethylallyl)adenosine (i(6)A). The sequence is that of tRNA dimethylallyltransferase from Rhodopseudomonas palustris (strain BisB18).